The primary structure comprises 305 residues: UDP-N-acetylenolpyruvoylglucosamine reductase (305 aa).

One can recognise an FAD-binding PCMH-type domain in the interval 22 to 190 (KVGGAADFFA…LSARFRLQAG (169 aa)). The active site involves Arg169. Ser220 acts as the Proton donor in catalysis. Glu290 is an active-site residue.

Belongs to the MurB family. It depends on FAD as a cofactor.

It is found in the cytoplasm. It carries out the reaction UDP-N-acetyl-alpha-D-muramate + NADP(+) = UDP-N-acetyl-3-O-(1-carboxyvinyl)-alpha-D-glucosamine + NADPH + H(+). It functions in the pathway cell wall biogenesis; peptidoglycan biosynthesis. Cell wall formation. The polypeptide is UDP-N-acetylenolpyruvoylglucosamine reductase (Synechococcus sp. (strain RCC307)).